The primary structure comprises 68 residues: U1-hexatoxin-Hv1a (68 aa).

Intrachain disulfides connect Cys3–Cys14, Cys8–Cys22, Cys13–Cys48, Cys32–Cys56, and Cys50–Cys63.

Belongs to the MIT-like AcTx family. As to expression, expressed by the venom gland.

It localises to the secreted. The polypeptide is U1-hexatoxin-Hv1a (Hadronyche versuta (Blue mountains funnel-web spider)).